Consider the following 987-residue polypeptide: Ras guanine nucleotide exchange factor efc25 (987 aa).

The segment covering 1-10 (MRRPNLDRLR) has biased composition (basic and acidic residues). Disordered stretches follow at residues 1-50 (MRRP…STMS), 100-130 (FSST…PEIR), and 529-552 (NANT…ISRS). A compositionally biased stretch (low complexity) spans 19–39 (TSVSKPSTPSYSTYSLSPTFS). Composition is skewed to polar residues over residues 40 to 50 (DKSVLSPSTMS), 102 to 111 (STHSLTRQPS), and 540 to 552 (RQTN…ISRS). Ser-552 is modified (phosphoserine). An N-terminal Ras-GEF domain is found at 590-723 (SDNNVKGGTL…VILSEIDNLW (134 aa)). Residues 752–985 (TPEEFASQMT…FDKSLSLEPR (234 aa)) enclose the Ras-GEF domain.

The protein resides in the cytoplasm. Has a role in chromosome segregation and cell morphology upstream of the ras1-scd1 pathway. Promotes the exchange of ras1-bound GDP by GTP leading to its activation. This is Ras guanine nucleotide exchange factor efc25 (efc25) from Schizosaccharomyces pombe (strain 972 / ATCC 24843) (Fission yeast).